The chain runs to 286 residues: Release factor glutamine methyltransferase (286 aa).

Residues 122 to 126 (GTGTG), aspartate 145, tryptophan 173, and asparagine 188 contribute to the S-adenosyl-L-methionine site. 188 to 191 (NPPY) contributes to the substrate binding site.

The protein belongs to the protein N5-glutamine methyltransferase family. PrmC subfamily.

The catalysed reaction is L-glutaminyl-[peptide chain release factor] + S-adenosyl-L-methionine = N(5)-methyl-L-glutaminyl-[peptide chain release factor] + S-adenosyl-L-homocysteine + H(+). Methylates the class 1 translation termination release factors RF1/PrfA and RF2/PrfB on the glutamine residue of the universally conserved GGQ motif. The chain is Release factor glutamine methyltransferase from Shewanella oneidensis (strain ATCC 700550 / JCM 31522 / CIP 106686 / LMG 19005 / NCIMB 14063 / MR-1).